Reading from the N-terminus, the 539-residue chain is Carboxysome assembly protein CcmM (539 aa).

Positions M1–T214 are carbonic anhydrase-like domain. A disordered region spans residues T194 to A213. A RbcS-like repeat 1, SSUL1 repeat occupies S226–S397. 2 disulfide bridges follow: C261–C279 and C377–C395. The stretch at L341 to P425 is one RbcS-like repeat 2, SSUL2 repeat. The tract at residues G427–V459 is disordered. Over residues S431 to S457 the composition is skewed to low complexity. The RbcS-like repeat 3, SSUL3 repeat unit spans residues G453–P539.

The protein belongs to the gamma-class carbonic anhydrase family. As to quaternary structure, probably a homotrimer. Purifies from carboxysomes in complex with both RuBisCO subunits and carbonic anhydrase (ccaA); the complex is probably associated with the carboxysome shell. Interacts with CcmN. Binds holo-RuBisCO (RbcL(8)-RbcS(8)) via its SSUL domains; the SSUL domain binds close to the equitorial domain of RuBisCO between RbcL dimers, with 1 M35 protein per dimer. The short form purifies from carboxysomes in complex with both RuBisCO subunits; the complex is probably associated with the carboxysome shell. Post-translationally, identified as 2 proteins of 58 and 38 kDa by mass spectrometry, called M58 and M35, the shorter protein is translated starting at Val-216. Protease inhibitors do not alter the appearance of M35. In isolated carboxysomes M35 is 4-5 fold more abundant. The first amino acid (equivalent to Val-216) is not seen in Edman degradation, while Tyr-219 and Gln-222 may be post-translationally modified.

The protein localises to the carboxysome. Functionally, functions as a scaffold protein for the assembly of beta-carboxysomes, initiates carboxysome assembly by coalescing RuBisCO (ribulose bisphosphate carboxylase, rbcL-rbcS). Produced as a full-length (M58) and a shorter form (M35); both forms are required for correct carboxysome assembly and growth. The short form is more abundant. Despite its strong similarity to gamma-class carbonic anhydrase (CA) it does not have detectable CA activity. In terms of biological role, the M35 isoform is able to condense RuBisCO into a liquid matrix; the presence of disulfide bonds in M35 reduces affinity for RuBisCO, while mutating all 4 Cys to Ser causes a 4-fold increase in doubling time, more than 15% increase in CO(2) requirement, and abnormal carboxysomes. Beta-carboxysome assembly initiates when soluble RuBisCO is condensed into a liquid matrix in a pre-carboxysome by the RbcS-like domains of probably both CcmM58 and CcmM35. CcmN interacts with the N-terminus of CcmM58, and then recruits the CcmK2 major shell protein plus other less abundant CcmK proteins via CcmN's encapsulation peptide. Shell formation requires CcmK proteins and CcmO. CcmL caps the otherwise elongated carboxysome. Once fully encapsulated carboxysomes are formed, they migrate within the cell probably via interactions with the cytoskeleton. This Synechococcus elongatus (strain ATCC 33912 / PCC 7942 / FACHB-805) (Anacystis nidulans R2) protein is Carboxysome assembly protein CcmM.